The following is a 126-amino-acid chain: Small ribosomal subunit protein uS13 (126 aa).

The segment at 99–126 (LRGQSTKNNARTRKGKRKTVANKKRVTK) is disordered. A compositionally biased stretch (basic residues) spans 108–126 (ARTRKGKRKTVANKKRVTK).

This sequence belongs to the universal ribosomal protein uS13 family. Part of the 30S ribosomal subunit. Forms a loose heterodimer with protein S19. Forms two bridges to the 50S subunit in the 70S ribosome.

Functionally, located at the top of the head of the 30S subunit, it contacts several helices of the 16S rRNA. In the 70S ribosome it contacts the 23S rRNA (bridge B1a) and protein L5 of the 50S subunit (bridge B1b), connecting the 2 subunits; these bridges are implicated in subunit movement. Contacts the tRNAs in the A and P-sites. In Azobacteroides pseudotrichonymphae genomovar. CFP2, this protein is Small ribosomal subunit protein uS13.